Consider the following 187-residue polypeptide: Adenylate kinase (187 aa).

Residue 10–15 (GSGKGT) participates in ATP binding. The interval 30–59 (STGDMLRAEIAAGTELGKQAKTVMDAGNLV) is NMP. AMP contacts are provided by residues Thr-31, Arg-36, 57–59 (NLV), 85–88 (GYPR), and Gln-92. The tract at residues 126 to 136 (GRAKEQGRADD) is LID. Arg-127 is an ATP binding site. 2 residues coordinate AMP: Arg-133 and Arg-144. Gly-172 is an ATP binding site.

This sequence belongs to the adenylate kinase family. In terms of assembly, monomer.

It localises to the cytoplasm. It catalyses the reaction AMP + ATP = 2 ADP. The protein operates within purine metabolism; AMP biosynthesis via salvage pathway; AMP from ADP: step 1/1. Functionally, catalyzes the reversible transfer of the terminal phosphate group between ATP and AMP. Plays an important role in cellular energy homeostasis and in adenine nucleotide metabolism. The protein is Adenylate kinase of Stenotrophomonas maltophilia (strain K279a).